The sequence spans 81 residues: Toxin F-VIII (81 aa).

Residues 1–21 form the signal peptide; it reads MKTLLLTLLVVTIVCLDLAST. 4 disulfide bridges follow: cysteine 24-cysteine 43, cysteine 38-cysteine 60, cysteine 62-cysteine 73, and cysteine 74-cysteine 79.

The protein belongs to the three-finger toxin family. Short-chain subfamily. Orphan group XI sub-subfamily. In terms of tissue distribution, expressed by the venom gland.

The protein resides in the secreted. Its function is as follows. Is cytotoxic against A549 cells (LC(50)=106 ug/ml). The sequence is that of Toxin F-VIII from Dendroaspis angusticeps (Eastern green mamba).